Here is a 38-residue protein sequence, read N- to C-terminus: Bacteriocin curvaticin FS47 (38 aa).

It is found in the secreted. In terms of biological role, bacteriocin active against Listeria monocytogenes, Pediococcus, Enterococcus, Lactobacilli and Bacilli. In Latilactobacillus curvatus (Lactobacillus curvatus), this protein is Bacteriocin curvaticin FS47.